The following is a 957-amino-acid chain: SH3 domain-binding protein 4-A (957 aa).

The 60-residue stretch at 54–113 (ENVKEVVAIKDYCPNNFTTLKFSKGEHLYVLDASGGDWWYAHNSTEMGYIPSSYVQPLNY) folds into the SH3 1 domain. The ZU5 domain occupies 312–449 (TSIVCRLDSS…LEPVMYVVMV (138 aa)). In terms of domain architecture, SH3 2 spans 649–719 (TSLKYGKLLK…HAKNVLVVGK (71 aa)).

As to quaternary structure, homodimer or homooligomer.

It localises to the membrane. It is found in the clathrin-coated pit. The protein localises to the cytoplasmic vesicle. The protein resides in the clathrin-coated vesicle. Its subcellular location is the nucleus. Its function is as follows. Possible role in regulating endocytosis of the transferrin receptor at the plasma membrane. Alternatively, may function as a negative regulator of the amino acid-induced TOR signaling by inhibiting the formation of active Rag GTPase complexes. Preferentially binds inactive Rag GTPase complexes and prevents their interaction with the mTORC1 complex inhibiting its relocalization to lysosomes and its activation. Thereby, may indirectly regulate cell growth, proliferation and autophagy. The protein is SH3 domain-binding protein 4-A (sh3bp4-a) of Xenopus laevis (African clawed frog).